The primary structure comprises 252 residues: tRNA (guanine-N(1)-)-methyltransferase (252 aa).

Residues glycine 117 and 137–142 contribute to the S-adenosyl-L-methionine site; that span reads IGDYVL.

The protein belongs to the RNA methyltransferase TrmD family. In terms of assembly, homodimer.

Its subcellular location is the cytoplasm. It carries out the reaction guanosine(37) in tRNA + S-adenosyl-L-methionine = N(1)-methylguanosine(37) in tRNA + S-adenosyl-L-homocysteine + H(+). Its function is as follows. Specifically methylates guanosine-37 in various tRNAs. This Idiomarina loihiensis (strain ATCC BAA-735 / DSM 15497 / L2-TR) protein is tRNA (guanine-N(1)-)-methyltransferase.